The primary structure comprises 361 residues: Putative pumilio homolog 22 (361 aa).

The PUM-HD domain occupies 5-348 (RGYDLASQVL…NIVAIIDSET (344 aa)). 2 Pumilio repeats span residues 27–63 (HITY…EFLD) and 64–103 (LIAQ…RLHE). One copy of the Pumilio 3; degenerate repeat lies at 104–131 (LMAEFDEVLSTSVTADVDKLHKLASKLM). Residues 132–167 (LDSDLFFEFVITRRGSLMIQIILGKSEEVDQVILAG) form a Pumilio 4 repeat. The stretch at 168-205 (VKQRFIDVTTNFYGYRIMIQTIKVFKKRGDLKVYDQIL) is one Pumilio 5; degenerate repeat. The stretch at 206–243 (RLIGVHALYLTKDPDMGNKTFQHAINLHHQDCTTFIAC) is one Pumilio 6; degenerate repeat. Pumilio repeat units lie at residues 244 to 284 (GLQS…EIVK) and 285 to 319 (CDED…DFFG).

Its subcellular location is the cytoplasm. Its function is as follows. Sequence-specific RNA-binding protein that regulates translation and mRNA stability by binding the 3'-UTR of target mRNAs. The sequence is that of Putative pumilio homolog 22 (APUM22) from Arabidopsis thaliana (Mouse-ear cress).